The chain runs to 229 residues: Thiamine-phosphate synthase (229 aa).

4-amino-2-methyl-5-(diphosphooxymethyl)pyrimidine contacts are provided by residues Gln38–Lys42 and Asn73. Asp74 and Asp93 together coordinate Mg(2+). Ser111 contacts 4-amino-2-methyl-5-(diphosphooxymethyl)pyrimidine. Residue Thr137 to Ser139 coordinates 2-[(2R,5Z)-2-carboxy-4-methylthiazol-5(2H)-ylidene]ethyl phosphate. Position 140 (Lys140) interacts with 4-amino-2-methyl-5-(diphosphooxymethyl)pyrimidine. 2-[(2R,5Z)-2-carboxy-4-methylthiazol-5(2H)-ylidene]ethyl phosphate-binding positions include Gly169 and Ile189–Ser190.

Belongs to the thiamine-phosphate synthase family. The cofactor is Mg(2+).

It catalyses the reaction 2-[(2R,5Z)-2-carboxy-4-methylthiazol-5(2H)-ylidene]ethyl phosphate + 4-amino-2-methyl-5-(diphosphooxymethyl)pyrimidine + 2 H(+) = thiamine phosphate + CO2 + diphosphate. It carries out the reaction 2-(2-carboxy-4-methylthiazol-5-yl)ethyl phosphate + 4-amino-2-methyl-5-(diphosphooxymethyl)pyrimidine + 2 H(+) = thiamine phosphate + CO2 + diphosphate. The catalysed reaction is 4-methyl-5-(2-phosphooxyethyl)-thiazole + 4-amino-2-methyl-5-(diphosphooxymethyl)pyrimidine + H(+) = thiamine phosphate + diphosphate. It participates in cofactor biosynthesis; thiamine diphosphate biosynthesis; thiamine phosphate from 4-amino-2-methyl-5-diphosphomethylpyrimidine and 4-methyl-5-(2-phosphoethyl)-thiazole: step 1/1. In terms of biological role, condenses 4-methyl-5-(beta-hydroxyethyl)thiazole monophosphate (THZ-P) and 2-methyl-4-amino-5-hydroxymethyl pyrimidine pyrophosphate (HMP-PP) to form thiamine monophosphate (TMP). In Streptococcus suis (strain 98HAH33), this protein is Thiamine-phosphate synthase.